The following is an 827-amino-acid chain: N-terminal kinase-like protein (827 aa).

One can recognise a Protein kinase domain in the interval 1 to 309 (MWFWSRDPAR…PEDFCRHKIL (309 aa)). 3 HEAT repeats span residues 345–383 (IIPVVVKMFSSTDRAMRIRLLQQMENFIQYLNEPTVNAQ), 384–422 (IFPHVVHGFMDTNPAIREQTVKSMLLLAPKLNENNLNME), and 502–540 (VLPVLCGVTVDPEKNVREQAFKAIRSFLDKLETVSEDPS). Positions 586 to 624 (DAAASEGASAPSTASEASKPDTAPSSSAPPAAASTAPTS) are enriched in low complexity. A disordered region spans residues 586-827 (DAAASEGASA…PLKLGVRKLD (242 aa)). Over residues 630–640 (EKGAPDNSLDR) the composition is skewed to basic and acidic residues. The segment covering 641-652 (WDDEDWGSLEDA) has biased composition (acidic residues). Residues 667-678 (DWGHGKTQEKTV) are compositionally biased toward basic and acidic residues. Polar residues-rich tracts occupy residues 679–690 (DFSSSRSKTKQV) and 737–746 (NWDTSGSSGR). Over residues 774–783 (GGDDNWESVE) the composition is skewed to acidic residues. Residues 788–817 (LSKAEMARKKREERQKEIEAKRAERRAAKG) are a coiled coil. Residues 792 to 814 (EMARKKREERQKEIEAKRAERRA) are compositionally biased toward basic and acidic residues.

This sequence belongs to the protein kinase superfamily.

In terms of biological role, regulates COPI-mediated retrograde protein traffic at the interface between the Golgi apparatus and the endoplasmic reticulum. Involved in the maintenance of the Golgi apparatus morphology. The polypeptide is N-terminal kinase-like protein (scyl1) (Xenopus tropicalis (Western clawed frog)).